The primary structure comprises 109 residues: Anti-sigma-B factor antagonist (109 aa).

Positions 3-109 (INVDVKQNEN…ISAKSEGGVQ (107 aa)) constitute an STAS domain. Residues Ser-52 and Ser-56 each carry the phosphoserine modification. The residue at position 57 (Thr-57) is a Phosphothreonine.

Belongs to the anti-sigma-factor antagonist family. Monomer. In stressed cells, forms a complex with RsbW. The predominant form of this complex has a stoichiometry of 2:2 (one dimer of RsbW is bound by two monomers of RsbV). Binds to RsbW in the presence of low levels of ATP or under conditions of energy or environmental stress (through dephosphorylation by RsbP or RsbU). Post-translationally, phosphorylated by RsbW on a serine residue. Dephosphorylated by RsbP or RsbU.

Positive regulator of sigma-B activity. Non-phosphorylated RsbV binds to RsbW, preventing its association with sigma-B. When phosphorylated, releases RsbW, which is then free to complex with and inactivate sigma-B. In Bacillus subtilis (strain 168), this protein is Anti-sigma-B factor antagonist (rsbV).